The primary structure comprises 259 residues: (3R)-3-hydroxyacyl-CoA dehydrogenase (259 aa).

Residues 13 to 21 (LVTGAGSGI) and 40 to 41 (DL) contribute to the NAD(+) site. S58 is subject to Phosphoserine. NAD(+) is bound at residue 72–74 (ADV). S154 is a binding site for substrate. Residue K158 is modified to N6-succinyllysine. The active-site Proton acceptor is the Y167. NAD(+) is bound by residues 167–171 (YAASK) and 200–202 (ITT). N6-succinyllysine is present on K171.

This sequence belongs to the short-chain dehydrogenases/reductases (SDR) family. As to quaternary structure, heterotetramer with CBR4; contains two molecules of HSD17B8 and CBR4.

The protein localises to the mitochondrion matrix. It catalyses the reaction a (3R)-3-hydroxyacyl-CoA + NAD(+) = a 3-oxoacyl-CoA + NADH + H(+). It carries out the reaction 17beta-estradiol + NAD(+) = estrone + NADH + H(+). The catalysed reaction is testosterone + NAD(+) = androst-4-ene-3,17-dione + NADH + H(+). The enzyme catalyses 17beta-hydroxy-5alpha-androstan-3-one + NAD(+) = 5alpha-androstan-3,17-dione + NADH + H(+). It functions in the pathway steroid biosynthesis; estrogen biosynthesis. Its pathway is lipid metabolism; fatty acid biosynthesis. The protein operates within lipid metabolism; mitochondrial fatty acid beta-oxidation. Its function is as follows. Required for the solubility and assembly of the heterotetramer 3-ketoacyl-[acyl carrier protein] (ACP) reductase functional complex (KAR or KAR1) that forms part of the mitochondrial fatty acid synthase (mtFAS). Alpha-subunit of the KAR complex that acts as scaffold protein required for the stability of carbonyl reductase type-4 (CBR4, beta-subunit of the KAR complex) and for its 3-ketoacyl-ACP reductase activity, thereby participating in mitochondrial fatty acid biosynthesis. Catalyzes the NAD-dependent conversion of (3R)-3-hydroxyacyl-CoA into 3-ketoacyl-CoA (3-oxoacyl-CoA) with no chain length preference; this enzymatic activity is not needed for the KAR function. Prefers (3R)-3-hydroxyacyl-CoA over (3S)-3-hydroxyacyl-CoA and displays enzymatic activity only in the presence of NAD(+). Cooperates with enoyl-CoA hydratase 1 in mitochondria, together they constitute an alternative route to the auxiliary enzyme pathways for the breakdown of Z-PUFA (cis polyunsaturated fatty acid) enoyl-esters. NAD-dependent 17-beta-hydroxysteroid dehydrogenase with highest activity towards estradiol (17beta-estradiol or E2). Has very low activity towards testosterone and dihydrotestosterone (17beta-hydroxy-5alpha-androstan-3-one). Primarily an oxidative enzyme, it can switch to a reductive mode determined in the appropriate physiologic milieu and catalyze the reduction of estrone (E1) to form biologically active 17beta-estradiol. This is (3R)-3-hydroxyacyl-CoA dehydrogenase (HSD17B8) from Canis lupus familiaris (Dog).